A 504-amino-acid polypeptide reads, in one-letter code: MAPIDFRNKINWHRRFRSPQGSKSEHEILRIFESDRGRIINSPAIRRLQQKTQVFPLERNAAVRTRLTHSMEVQQVGRYIAKEILSRLKEQRLLETYGLDELTGPFESIVEMACLMHDIGNPPFGHFGEAAINDWFKQRLFPLDAASQPQSDDRCIVRDLRLREGEEPLNDLRRKVRQDLCQFEGNAQGIRLVHSLMRMNLTWAQVGCILKYTRPAWWMGEPPASHSYLMKKPGYYLSEEAYIERLRKELSLTPHGRFPLTWIMEAADDISYCVADLEDAVEKRIFSVEELYQHLYDAWGTHEKGSLFSQVVENAWDKSRSNTLSRSTEDQFFMYLRVNTLNKLVPYSAARFIDNLPAIFSGDFNHALLEDDSSFSQLLELYKNVAIRHVFSHPDVEQLELQGYRVISGLLDIYQPLLKLSVEEFTELVETDLMKRLPIETRLLHKLSTRHRLAYVEAVSKIDRTTAQWPVMEYYYRCRLIQDYISGMTDLYAWDEYRRLMAVE.

Residues R66–C273 form the HD domain.

Belongs to the dGTPase family. Type 1 subfamily. In terms of assembly, homotetramer. It depends on Mg(2+) as a cofactor.

The enzyme catalyses dGTP + H2O = 2'-deoxyguanosine + triphosphate + H(+). Functionally, dGTPase preferentially hydrolyzes dGTP over the other canonical NTPs. The sequence is that of Deoxyguanosinetriphosphate triphosphohydrolase from Enterobacter sp. (strain 638).